We begin with the raw amino-acid sequence, 240 residues long: FAS1 domain-containing protein AN1527 (240 aa).

Positions 1-24 (MRQLSTTALVLFLFFYCSISTAWS) are cleaved as a signal peptide. The FAS1 domain maps to 91–239 (EPTISDVLPK…GEVWVIDGVI (149 aa)).

It is found in the vacuole. The sequence is that of FAS1 domain-containing protein AN1527 from Emericella nidulans (strain FGSC A4 / ATCC 38163 / CBS 112.46 / NRRL 194 / M139) (Aspergillus nidulans).